Here is a 393-residue protein sequence, read N- to C-terminus: Diphosphomevalonate decarboxylase (393 aa).

Residues 21–24 (YWGK), arginine 77, 156–161 (SGSACR), and threonine 212 each bind (R)-5-diphosphomevalonate.

Belongs to the diphosphomevalonate decarboxylase family. Homodimer.

It is found in the cytoplasm. The protein resides in the nucleus. It catalyses the reaction (R)-5-diphosphomevalonate + ATP = isopentenyl diphosphate + ADP + phosphate + CO2. Its pathway is isoprenoid biosynthesis; isopentenyl diphosphate biosynthesis via mevalonate pathway; isopentenyl diphosphate from (R)-mevalonate: step 3/3. Diphosphomevalonate decarboxylase; part of the second module of ergosterol biosynthesis pathway that includes the middle steps of the pathway. Mvd1 converts diphosphomevalonate into isopentenyl diphosphate. The second module is carried out in the vacuole and involves the formation of farnesyl diphosphate, which is also an important intermediate in the biosynthesis of ubiquinone, dolichol, heme and prenylated proteins. Activity by the mevalonate kinase erg12 first converts mevalonate into 5-phosphomevalonate. 5-phosphomevalonate is then further converted to 5-diphosphomevalonate by the phosphomevalonate kinase erg8. The diphosphomevalonate decarboxylase mvd1 then produces isopentenyl diphosphate. The isopentenyl-diphosphate delta-isomerase idi1 then catalyzes the 1,3-allylic rearrangement of the homoallylic substrate isopentenyl (IPP) to its highly electrophilic allylic isomer, dimethylallyl diphosphate (DMAPP). Finally the farnesyl diphosphate synthase fps1 catalyzes the sequential condensation of isopentenyl pyrophosphate with dimethylallyl pyrophosphate, and then with the resultant geranylpyrophosphate to the ultimate product farnesyl pyrophosphate. The sequence is that of Diphosphomevalonate decarboxylase (mvd1) from Schizosaccharomyces pombe (strain 972 / ATCC 24843) (Fission yeast).